A 229-amino-acid polypeptide reads, in one-letter code: UPF0758 protein Cbei_0490 (229 aa).

Residues 107–229 form the MPN domain; the sequence is KITSPKDLAS…FVSLKERGLI (123 aa). Zn(2+)-binding residues include H178, H180, and D191. A JAMM motif motif is present at residues 178 to 191; it reads HNHPSGDPTPSRED.

It belongs to the UPF0758 family.

The polypeptide is UPF0758 protein Cbei_0490 (Clostridium beijerinckii (strain ATCC 51743 / NCIMB 8052) (Clostridium acetobutylicum)).